Here is a 135-residue protein sequence, read N- to C-terminus: UPF0225 protein CV_3559 (135 aa).

It belongs to the UPF0225 family.

This Chromobacterium violaceum (strain ATCC 12472 / DSM 30191 / JCM 1249 / CCUG 213 / NBRC 12614 / NCIMB 9131 / NCTC 9757 / MK) protein is UPF0225 protein CV_3559.